A 413-amino-acid chain; its full sequence is Cell division protein FtsZ 2 (413 aa).

Residues 130 to 132 (GTG), Glu169, Arg173, and Asp216 contribute to the GTP site.

The protein belongs to the FtsZ family. Homodimer. Polymerizes to form a dynamic ring structure in a strictly GTP-dependent manner. Interacts directly with several other division proteins.

It localises to the cytoplasm. In terms of biological role, essential cell division protein that forms a contractile ring structure (Z ring) at the future cell division site. The regulation of the ring assembly controls the timing and the location of cell division. One of the functions of the FtsZ ring is to recruit other cell division proteins to the septum to produce a new cell wall between the dividing cells. Binds GTP and shows GTPase activity. The polypeptide is Cell division protein FtsZ 2 (Pyrococcus abyssi (strain GE5 / Orsay)).